A 636-amino-acid polypeptide reads, in one-letter code: Receptor-like kinase LIP1 (636 aa).

The tract at residues 18-57 is disordered; the sequence is NAPCTTNETNDDNVEHDEFRPPVVATTKRTEEREPAEQQP. The Protein kinase domain maps to 74 to 352; the sequence is FRQECLLGEG…SDVMVALSFL (279 aa). ATP is bound by residues 80–88 and Lys103; that span reads LGEGGFGRV. Asp201 (proton acceptor) is an active-site residue. 2 positions are modified to phosphoserine: Ser205 and Ser236. Position 242 is a phosphothreonine (Thr242). Position 250 is a phosphotyrosine (Tyr250). The segment at 389–636 is disordered; that stretch reads FCISRKDVGN…EEEHISSDHD (248 aa). The stretch at 403–434 forms a coiled coil; the sequence is SSDSEDEEEEKEQKAEKEEESTSKKRQEQEET. Residues 413-431 are compositionally biased toward basic and acidic residues; that stretch reads KEQKAEKEEESTSKKRQEQ. Positions 432 to 455 are enriched in acidic residues; sequence EETATDSDDESDSNSEKDQEEEQS. Polar residues predominate over residues 480-489; it reads TNATAQSLKI. Composition is skewed to basic and acidic residues over residues 522–531 and 554–566; these read DSGRDHDDSS and HETR…DDSP. Over residues 567–576 the composition is skewed to polar residues; it reads RNTSMRINSL. Basic and acidic residues-rich tracts occupy residues 588 to 603 and 619 to 636; these read NHQT…KSED and SLHR…SDHD.

The protein belongs to the protein kinase superfamily. Ser/Thr protein kinase family. In terms of assembly, interacts with PRK6. In terms of processing, palmitoylated. As to expression, expressed in mature pollen and in germinating pollen tubes.

It is found in the cell membrane. The protein localises to the cytoplasm. Functionally, involved in pollen tube guidance into micropyle. Participates in perception of the ovule-secreted peptide signal LURE1. This Arabidopsis thaliana (Mouse-ear cress) protein is Receptor-like kinase LIP1.